Here is a 129-residue protein sequence, read N- to C-terminus: MAKIYATGKRKTAIAKVWLTPGSGKLTVNGTTLNDWLGGHEAIKMKVMQPLLLTKQEKSVDIVSVTLGGGYSAQAEALRHGISKALSAYDIAFRAILKPKGLLTRDSRVVERKKYGKRKARRSPQFSKR.

The protein belongs to the universal ribosomal protein uS9 family.

The chain is Small ribosomal subunit protein uS9 from Wolinella succinogenes (strain ATCC 29543 / DSM 1740 / CCUG 13145 / JCM 31913 / LMG 7466 / NCTC 11488 / FDC 602W) (Vibrio succinogenes).